The chain runs to 87 residues: Defensin-like protein 223 (87 aa).

The N-terminal stretch at 1–34 is a signal peptide; sequence MKSTIFVLTLLIFVSLYFNIIVYVSFSFIGTSEI. Disulfide bonds link C55–C72, C58–C77, and C62–C79.

The protein belongs to the DEFL family.

It is found in the secreted. The chain is Defensin-like protein 223 from Arabidopsis thaliana (Mouse-ear cress).